The sequence spans 199 residues: Ion-translocating oxidoreductase complex subunit A (199 aa).

Transmembrane regions (helical) follow at residues 8-28 (LFTI…QFLG), 49-69 (VVFV…FILV), 75-95 (FLRT…VEFI), 106-126 (SLGI…AVLL), 138-158 (VVFG…MAAI), and 178-198 (AFFI…VIPL).

This sequence belongs to the NqrDE/RnfAE family. In terms of assembly, the Rnf complex is probably composed of eight subunits, including RnfA, RnfB, RnfC, RnfD, RnfE and RnfG.

The protein resides in the cell membrane. Functionally, part of a membrane-bound complex that couples electron transfer with translocation of ions across the membrane. Catalyzes Na(+) transport, most probably coupled to electron transfer from reduced ferredoxin to methanophenazine and heterodisulfide reductase. Involved in heterodisulfide reduction during methanogenesis from acetate. In Methanosarcina acetivorans (strain ATCC 35395 / DSM 2834 / JCM 12185 / C2A), this protein is Ion-translocating oxidoreductase complex subunit A.